Consider the following 264-residue polypeptide: Putative hydro-lyase RBAM_004300 (264 aa).

The protein belongs to the D-glutamate cyclase family.

This chain is Putative hydro-lyase RBAM_004300, found in Bacillus velezensis (strain DSM 23117 / BGSC 10A6 / LMG 26770 / FZB42) (Bacillus amyloliquefaciens subsp. plantarum).